Consider the following 323-residue polypeptide: tRNA N6-adenosine threonylcarbamoyltransferase (323 aa).

His105, His109, and Tyr126 together coordinate Fe cation. Residues Tyr126 to Gly130, Asp158, Gly171, Glu175, and Asn255 each bind substrate. Asp283 lines the Fe cation pocket.

The protein belongs to the KAE1 / TsaD family. Monomer. Component of the KEOPS complex that consists of Kae1, Bud32, Cgi121 and Pcc1; the whole complex dimerizes. It depends on Fe(2+) as a cofactor.

The protein localises to the cytoplasm. The enzyme catalyses L-threonylcarbamoyladenylate + adenosine(37) in tRNA = N(6)-L-threonylcarbamoyladenosine(37) in tRNA + AMP + H(+). Its function is as follows. Required for the formation of a threonylcarbamoyl group on adenosine at position 37 (t(6)A37) in tRNAs that read codons beginning with adenine. Is a component of the KEOPS complex that is probably involved in the transfer of the threonylcarbamoyl moiety of threonylcarbamoyl-AMP (TC-AMP) to the N6 group of A37. Kae1 likely plays a direct catalytic role in this reaction, but requires other protein(s) of the complex to fulfill this activity. In Archaeoglobus fulgidus (strain ATCC 49558 / DSM 4304 / JCM 9628 / NBRC 100126 / VC-16), this protein is tRNA N6-adenosine threonylcarbamoyltransferase.